Consider the following 171-residue polypeptide: PRA1-like protein (171 aa).

3 helical membrane-spanning segments follow: residues 67 to 87, 119 to 139, and 140 to 160; these read AIIAMLVIYALIRNPLLLIVI, VILACVLIPLGLFASPIETII, and WLVGASCVCVFGHAAFFEPPV.

Belongs to the PRA1 family.

The protein localises to the membrane. The chain is PRA1-like protein from Schizosaccharomyces pombe (strain 972 / ATCC 24843) (Fission yeast).